The chain runs to 288 residues: NAD(P)H quinone oxidoreductase YCP4 (288 aa).

The 190-residue stretch at 3–192 (IAIIQYSTYG…EIAEKQGEAF (190 aa)) folds into the Flavodoxin-like domain. Residues 9 to 13 (STYGH) and 110 to 164 (VFVS…SPYG) contribute to the FMN site. The tract at residues 202 to 288 (GSKKTNTTTT…KSSCSKCIIM (87 aa)) is disordered. Residues 205–254 (KTNTTTTSKSAATSDAAGTTSGTAAGTSAATGAATGTSAPKESTKEASSS) show a composition bias toward low complexity. Residues 261–288 (NGTATRTQQSTKAPETAEKSSCSKCIIM) are compositionally biased toward polar residues.

It belongs to the WrbA family. The cofactor is FMN.

Its subcellular location is the cell membrane. The catalysed reaction is a quinone + NADH + H(+) = a quinol + NAD(+). The enzyme catalyses a quinone + NADPH + H(+) = a quinol + NADP(+). In terms of biological role, flavodoxin-like protein (FLP) that plays a role in cell wall integrity, oxidative stress protection and virulence. FLPs act as NAD(P)H quinone oxidoreductases. Reduces ubiquinone (coenzyme Q), enabling it to serve as an antioxidant in the membrane. The polypeptide is NAD(P)H quinone oxidoreductase YCP4 (Candida albicans (strain SC5314 / ATCC MYA-2876) (Yeast)).